The sequence spans 75 residues: Defensin-like protein (75 aa).

The signal sequence occupies residues 1-24 (MEKKSIAGLCFLFLVLFVAQEVVV). Intrachain disulfides connect cysteine 31-cysteine 75, cysteine 42-cysteine 63, cysteine 48-cysteine 69, and cysteine 52-cysteine 71.

The protein belongs to the DEFL family.

The protein localises to the secreted. In terms of biological role, this protein is required for germination. In Vigna unguiculata (Cowpea), this protein is Defensin-like protein.